The primary structure comprises 500 residues: Lysine--tRNA ligase (500 aa).

2 residues coordinate Mg(2+): Glu411 and Glu418.

This sequence belongs to the class-II aminoacyl-tRNA synthetase family. As to quaternary structure, homodimer. The cofactor is Mg(2+).

Its subcellular location is the cytoplasm. The catalysed reaction is tRNA(Lys) + L-lysine + ATP = L-lysyl-tRNA(Lys) + AMP + diphosphate. This chain is Lysine--tRNA ligase, found in Azoarcus sp. (strain BH72).